The chain runs to 182 residues: UPF0316 protein BCAH820_3389 (182 aa).

A run of 3 helical transmembrane segments spans residues 6-26 (LIFV…ILLV), 32-52 (SAAA…GIVF), and 58-78 (WMNI…GGYI).

Belongs to the UPF0316 family.

The protein localises to the cell membrane. In Bacillus cereus (strain AH820), this protein is UPF0316 protein BCAH820_3389.